Consider the following 184-residue polypeptide: Casparian strip membrane protein 3 (184 aa).

Topologically, residues 1 to 22 (MEGSGEHGETSKGPLSKGVSRG) are cytoplasmic. Residues 23–43 (LCILDLIFRVIAVIGTLASAI) traverse the membrane as a helical segment. At 44–72 (AMGTTNQTMPFFTQFVQFKERYSDLPTLT) the chain is on the extracellular side. The N-linked (GlcNAc...) asparagine glycan is linked to N49. The chain crosses the membrane as a helical span at residues 73-93 (FFVVANSIASAYLIISLPLSI). Topologically, residues 94–105 (VHIIRSRAKYSR) are cytoplasmic. A helical membrane pass occupies residues 106–126 (LILIFFDVAMLALVTAAASAG). At 127-159 (AAIVYLAHNGNVSANWFAICQQFDSFCERISGS) the chain is on the extracellular side. Residue N137 is glycosylated (N-linked (GlcNAc...) asparagine). A helical transmembrane segment spans residues 160 to 180 (LIGSFAAMVVLILLILLSAVA). The Cytoplasmic segment spans residues 181–184 (LARR).

This sequence belongs to the Casparian strip membrane proteins (CASP) family. As to quaternary structure, homodimer and heterodimers.

Its subcellular location is the cell membrane. Regulates membrane-cell wall junctions and localized cell wall deposition. Required for establishment of the Casparian strip membrane domain (CSD) and the subsequent formation of Casparian strips, a cell wall modification of the root endodermis that determines an apoplastic barrier between the intraorganismal apoplasm and the extraorganismal apoplasm and prevents lateral diffusion. This chain is Casparian strip membrane protein 3, found in Brachypodium distachyon (Purple false brome).